Reading from the N-terminus, the 471-residue chain is Tryptophanase (471 aa).

An N6-acetyllysine mark is found at lysine 5, lysine 115, and lysine 156. Lysine 270 carries the post-translational modification N6-(pyridoxal phosphate)lysine. Residue lysine 450 is modified to N6-acetyllysine.

Belongs to the beta-eliminating lyase family. As to quaternary structure, homotetramer. Requires pyridoxal 5'-phosphate as cofactor.

The catalysed reaction is L-tryptophan + H2O = indole + pyruvate + NH4(+). It participates in amino-acid degradation; L-tryptophan degradation via pyruvate pathway; indole and pyruvate from L-tryptophan: step 1/1. This chain is Tryptophanase, found in Escherichia fergusonii (strain ATCC 35469 / DSM 13698 / CCUG 18766 / IAM 14443 / JCM 21226 / LMG 7866 / NBRC 102419 / NCTC 12128 / CDC 0568-73).